Reading from the N-terminus, the 308-residue chain is MAGKKNVLSSLAIYAEYSDPESDGETGVDAVGGATEEKGGLVSDAYGEDDFSRPGGDEDGYEEEEDENSKQSEDDDSETEKPEADDPKDNTEAEKRDPQELVASFSERVRNMSPDEIKIPPEPPGRCSNHLQDKIQKLYERKIKEGMDMNYIIQRKKEFRNPSIYEKLIQFCAIDELGTNYPKDMFDPHGWSEDSYYEALAKAQKIEMDKLEKAKKERTKIEFVTGTKKGTTTNATATSTSTASTAVADAQKRKSKWDSAIPVTTIAQPTILTTTATLPAVVTVTTSASGSKTTVISAVGTIVKKAKQ.

Residues 15 to 101 are disordered; the sequence is AEYSDPESDG…EAEKRDPQEL (87 aa). Phosphoserine is present on residues serine 18, serine 22, serine 43, and serine 52. Residues 57–78 are compositionally biased toward acidic residues; the sequence is DEDGYEEEEDENSKQSEDDDSE. The segment covering 79-99 has biased composition (basic and acidic residues); that stretch reads TEKPEADDPKDNTEAEKRDPQ. A Glycyl lysine isopeptide (Lys-Gly) (interchain with G-Cter in SUMO2) cross-link involves residue lysine 95. Phosphoserine is present on serine 113. Residues lysine 220, lysine 304, and lysine 305 each participate in a glycyl lysine isopeptide (Lys-Gly) (interchain with G-Cter in SUMO2) cross-link.

It belongs to the HCNGP family. In terms of assembly, interacts with histone deacetylase complex subunit SAP30.

The protein resides in the nucleus. Functionally, plays a role in transcriptional repression by promoting histone deacetylase activity, leading to deacetylation of histone H3. May be involved in the regulation of beta-2-microglobulin genes. The sequence is that of SAP30-binding protein (Sap30bp) from Mus musculus (Mouse).